Consider the following 248-residue polypeptide: (2S)-[(R)-hydroxy(phenyl)methyl]succinyl-CoA dehydrogenase subunit BbsD (248 aa).

NAD(+)-binding residues include serine 15, aspartate 36, aspartate 62, isoleucine 63, asparagine 89, tyrosine 153, and lysine 157. The active-site Proton acceptor is the tyrosine 153.

It belongs to the short-chain dehydrogenases/reductases (SDR) family. As to quaternary structure, heterotetramer composed of 2 inactive BbsC subunits and 2 active BbsD subunits.

The enzyme catalyses (2S)-[(R)-hydroxy(phenyl)methyl]succinyl-CoA + NAD(+) = (S)-2-benzoylsuccinyl-CoA + NADH + H(+). Its pathway is xenobiotic degradation; toluene degradation. Activity is probably regulated by the inactive BbsC subunit. Functionally, involved in an anaerobic toluene degradation pathway. Active subunit that catalyzes the oxidation of 2-(alpha-hydroxybenzyl)succinyl-CoA to 2-benzoylsuccinyl-CoA. In vitro, can catalyze the NADH-dependent reduction of the artificial substrates 2,2-dichloroacetophene and 2,4'-dichloroacetophenone. The protein is (2S)-[(R)-hydroxy(phenyl)methyl]succinyl-CoA dehydrogenase subunit BbsD of Thauera aromatica.